We begin with the raw amino-acid sequence, 158 residues long: Transcription elongation factor GreA (158 aa).

The protein belongs to the GreA/GreB family.

Functionally, necessary for efficient RNA polymerase transcription elongation past template-encoded arresting sites. The arresting sites in DNA have the property of trapping a certain fraction of elongating RNA polymerases that pass through, resulting in locked ternary complexes. Cleavage of the nascent transcript by cleavage factors such as GreA or GreB allows the resumption of elongation from the new 3'terminus. GreA releases sequences of 2 to 3 nucleotides. The sequence is that of Transcription elongation factor GreA from Allorhizobium ampelinum (strain ATCC BAA-846 / DSM 112012 / S4) (Agrobacterium vitis (strain S4)).